The chain runs to 470 residues: 5-hydroxytryptamine receptor 2A (470 aa).

The tract at residues 1-23 (MDVLFEDNAPLSPTTSSLMPSNG) is disordered. Over 1–80 (MDVLFEDNAP…LQEKNWSALL (80 aa)) the chain is Extracellular. A compositionally biased stretch (low complexity) spans 10–21 (PLSPTTSSLMPS). 4 N-linked (GlcNAc...) asparagine glycosylation sites follow: asparagine 38, asparagine 44, asparagine 51, and asparagine 54. A helical membrane pass occupies residues 81–97 (TAVVIILTIAGNILVIM). Over 98-111 (AVSLEKKLQNATNY) the chain is Cytoplasmic. The chain crosses the membrane as a helical span at residues 112–137 (FLMSLAIADMLLGFLVMPVSMLTILY). The Extracellular portion of the chain corresponds to 138-146 (GYRWPLPSK). Residues 147–171 (LCAVWIYLDVLFSTASIMHLCAISL) form a helical membrane-spanning segment. Residues cysteine 148 and cysteine 227 are joined by a disulfide bond. A serotonin-binding site is contributed by aspartate 155. Residues 172-174 (DRY) carry the DRY motif; important for ligand-induced conformation changes motif. Residues 172–191 (DRYVAIQNPIHHSRFNSRTK) lie on the Cytoplasmic side of the membrane. The helical transmembrane segment at 192-215 (AFLKIIAVWTISVGISMPIPVFGL) threads the bilayer. The Extracellular segment spans residues 216-232 (QDDSKVFKEGSCLLADD). Residues 233 to 258 (NFVLIGSFVSFFIPLTIMVITYFLTI) traverse the membrane as a helical segment. Residues 259–321 (KSLQKEATLC…QSISNEQKAC (63 aa)) are Cytoplasmic-facing. The residue at position 280 (serine 280) is a Phosphoserine. The chain crosses the membrane as a helical span at residues 322-347 (KVLGIVFFLFVVMWCPFFITNIMAVI). Residue asparagine 342 coordinates serotonin. A disulfide bridge links cysteine 348 with cysteine 352. Over 348–355 (CKESCNED) the chain is Extracellular. Residues 356–381 (IIGALLNVFVWIGYLSSAVNPLVYTL) traverse the membrane as a helical segment. The short motif at 375 to 379 (NPLVY) is the NPxxY motif; important for ligand-induced conformation changes and signaling element. At 382-470 (FNKTYRSAFS…NTVNEKVSCV (89 aa)) the chain is on the cytoplasmic side. The PDZ-binding motif lies at 468–470 (SCV).

Belongs to the G-protein coupled receptor 1 family. Interacts (via C-terminus) with MPDZ and PATJ. May interact (via C-terminus) with MPP3, PRDX6, DLG4, DLG1, CASK, APBA1 and MAGI2. Interacts with GRM2 and DRD2; this may affect signaling. Ubiquitous.

Its subcellular location is the cell membrane. The protein localises to the cell projection. The protein resides in the dendrite. It localises to the axon. It is found in the cytoplasmic vesicle. Its subcellular location is the membrane. The protein localises to the caveola. The protein resides in the presynapse. Its activity is regulated as follows. G-protein coupled receptor activity is regulated by lipids: oleamide increases HTR2A-mediated activity. G-protein coupled receptor for 5-hydroxytryptamine (serotonin). Also functions as a receptor for various drugs and psychoactive substances, including mescaline, psilocybin, 1-(2,5-dimethoxy-4-iodophenyl)-2-aminopropane (DOI) and lysergic acid diethylamide (LSD). Ligand binding causes a conformation change that triggers signaling via guanine nucleotide-binding proteins (G proteins) and modulates the activity of downstream effectors. HTR2A is coupled to G(q)/G(11) G alpha proteins and activates phospholipase C-beta, releasing diacylglycerol (DAG) and inositol 1,4,5-trisphosphate (IP3) second messengers that modulate the activity of phosphatidylinositol 3-kinase and promote the release of Ca(2+) ions from intracellular stores, respectively. Beta-arrestin family members inhibit signaling via G proteins and mediate activation of alternative signaling pathways. Affects neural activity, perception, cognition and mood. Plays a role in the regulation of behavior, including responses to anxiogenic situations and psychoactive substances. Plays a role in intestinal smooth muscle contraction, and may play a role in arterial vasoconstriction. The sequence is that of 5-hydroxytryptamine receptor 2A (HTR2A) from Canis lupus familiaris (Dog).